The sequence spans 336 residues: HTH-type transcriptional repressor PurR (336 aa).

The region spanning 2–56 (ATIKDVAKMAGVSTTTVSHVINKTRFVAKDTEEAVLSAIKQLNYSPSAVARSLKV) is the HTH lacI-type domain. The H-T-H motif DNA-binding region spans 4 to 23 (IKDVAKMAGVSTTTVSHVIN). The DNA-binding element occupies 48-56 (SAVARSLKV). Residues tyrosine 73, lysine 188, threonine 190, phenylalanine 219, and aspartate 273 each contribute to the hypoxanthine site.

Homodimer.

Its pathway is purine metabolism; purine nucleotide biosynthesis [regulation]. Functionally, is the main repressor of the genes involved in the de novo synthesis of purine nucleotides, regulating purB, purC, purEK, purF, purHD, purL, purMN and guaBA expression. PurR is allosterically activated to bind its cognate DNA by binding the purine corepressors, hypoxanthine or guanine, thereby effecting transcription repression. This is HTH-type transcriptional repressor PurR from Haemophilus influenzae (strain PittGG).